Consider the following 2035-residue polypeptide: Ral GTPase-activating protein subunit alpha-1 (2035 aa).

2 disordered regions span residues 343 to 384 and 477 to 496; these read LVSR…SSLC and DGEK…VRNS. The segment covering 345–365 has biased composition (basic and acidic residues); that stretch reads SREESKNDTVDKVDKSAEPEQ. 2 stretches are compositionally biased toward polar residues: residues 366 to 384 and 486 to 496; these read SHSN…SSLC and GTSTSEHVRNS. A phosphoserine mark is found at Ser710 and Ser720. A disordered region spans residues 714-752; it reads SFSRGWSRDQPGQAPMRQRSATTTGSPGTEKARSIVRQK. Phosphothreonine is present on Thr753. Phosphoserine is present on Ser772. The residue at position 777 (Thr777) is a Phosphothreonine. Residue Ser796 is modified to Phosphoserine. Positions 807–817 are enriched in basic and acidic residues; that stretch reads ERAKVNKEDTS. 2 disordered regions span residues 807–834 and 848–911; these read ERAK…SANV and SGNA…SHSD. Polar residues-rich tracts occupy residues 824–833 and 849–862; these read NSETGGNSAN and GNAS…SSPG. 3 positions are modified to phosphoserine: Ser859, Ser860, and Ser863. A compositionally biased stretch (low complexity) spans 894–911; it reads SPASAGSSDLMSSDSHSD. Phosphoserine occurs at positions 985, 989, 993, and 999. A compositionally biased stretch (polar residues) spans 986-1008; that stretch reads ESASPVHSALGSRSQTPSPSTLS. Residues 986 to 1011 form a disordered region; the sequence is ESASPVHSALGSRSQTPSPSTLSRAH. Thr1001 carries the post-translational modification Phosphothreonine. 2 positions are modified to phosphoserine: Ser1003 and Ser1477. Residues 1326–2035 form a minimal domain that binds to TCF3/E12 region; the sequence is FTNKTVAHVA…YHHFPADADH (710 aa). The stretch at 1713 to 1748 forms a coiled coil; the sequence is SEKQENDVINAILKQYTEEKEFVEKHFNDLNMKASE. Residues 1795–2003 form the Rap-GAP domain; it reads LRNLDSRQCR…EERARYLQTI (209 aa).

As to quaternary structure, component of the heterodimeric RalGAP1 complex with RALGAPB. Heterodimerization is required for activity. Interacts with the HLH region of TCF3/isoform E12. Expressed during embryogenesis. Expressed in the adult brain, particularly in neurons of the cortex and hippocampus.

The protein resides in the cytoplasm. The protein localises to the nucleus. Its function is as follows. Catalytic subunit of the heterodimeric RalGAP1 complex which acts as a GTPase activator for the Ras-like small GTPases RALA and RALB. May interact with the HLH region of TCF3/isoform E12. The protein is Ral GTPase-activating protein subunit alpha-1 (Ralgapa1) of Mus musculus (Mouse).